The following is a 207-amino-acid chain: Outer-membrane lipoprotein carrier protein (207 aa).

Residues 1–22 (MKLSEKFCVFLFFLLFTSTTHA) form the signal peptide.

It belongs to the LolA family. Monomer.

The protein resides in the periplasm. In terms of biological role, participates in the translocation of lipoproteins from the inner membrane to the outer membrane. Only forms a complex with a lipoprotein if the residue after the N-terminal Cys is not an aspartate (The Asp acts as a targeting signal to indicate that the lipoprotein should stay in the inner membrane). The protein is Outer-membrane lipoprotein carrier protein of Nitrosospira multiformis (strain ATCC 25196 / NCIMB 11849 / C 71).